A 736-amino-acid chain; its full sequence is Na(+)/H(+) antiporter NhaA (736 aa).

Residues 1-387 (MNHSPQSARP…ICGYLLLRAA (387 aa)) are na(+)/H(+) antiporter NhaA. 12 consecutive transmembrane segments (helical) span residues 23 to 43 (AGGI…NSPF), 58 to 78 (LSLA…LVGL), 96 to 116 (MLPG…FAVL), 126 to 146 (GWAV…SLLG), 155 to 175 (VFLA…IAIF), 178 to 198 (AEIS…LFVM), 201 to 221 (MGVV…FFVF), 224 to 244 (GVHA…KPAP), 265 to 285 (VAFI…FKGL), 298 to 318 (ILLG…WLAI), 334 to 354 (LYGV…IGLL), and 367 to 387 (IGVL…LRAA). The peptidase S49 stretch occupies residues 388 to 736 (RPDQSAANPL…EKAIWARYGL (349 aa)).

This sequence in the N-terminal section; belongs to the NhaA Na(+)/H(+) (TC 2.A.33) antiporter family. It in the C-terminal section; belongs to the peptidase S49 family.

It is found in the cell inner membrane. It carries out the reaction Na(+)(in) + 2 H(+)(out) = Na(+)(out) + 2 H(+)(in). Functionally, na(+)/H(+) antiporter that extrudes sodium in exchange for external protons. The polypeptide is Na(+)/H(+) antiporter NhaA (Brucella abortus (strain 2308)).